Consider the following 717-residue polypeptide: Nuclear factor of activated T-cells, cytoplasmic 1 (717 aa).

A disordered region spans residues 1 to 38 (MPNTSFPVPSKFPLGPPAAVCGSGETLRPAPPSGGTMK). The segment at 120–125 (PRIEIT) is calcineurin-binding. The transactivation domain A (TAD-A) stretch occupies residues 128 to 220 (LGLHHGSGQF…CVSPKTTDPE (93 aa)). The segment at 202 to 298 (PQTSPWQSPC…PHGSPRVSVT (97 aa)) is disordered. Residues 203-216 (QTSPWQSPCVSPKT) show a composition bias toward polar residues. 2 tandem repeats follow at residues 205-221 (SPWQSPCVSPKTTDPEE) and 235-251 (SPRHSPSTSPRASITEE). The segment at 205-300 (SPWQSPCVSP…GSPRVSVTED (96 aa)) is 3 X SP repeats. S235 and S239 each carry phosphoserine. Polar residues predominate over residues 238 to 250 (HSPSTSPRASITE). At S247 the chain carries Phosphoserine; by PKA. Positions 267 to 269 (KRK) match the Nuclear localization signal motif. A phosphoserine; by PKA mark is found at S271 and S296. Repeat unit 3 spans residues 284 to 300 (SPTPSPHGSPRVSVTED). The Nuclear export signal signature appears at 312-323 (SAIVAAINALTT). In terms of domain architecture, RHD spans 411–593 (PSLPALDWQL…NPIECSQRSA (183 aa)). A DNA-binding region spans residues 440–447 (RAHYETEG). Positions 683–685 (KRK) match the Nuclear localization signal motif.

Member of the multicomponent NFATC transcription complex that consists of at least two components, a pre-existing cytoplasmic component NFATC2 and an inducible nuclear component NFATC1. Other members such as NFATC4, NFATC3 or members of the activating protein-1 family, MAF, GATA4 and Cbp/p300 can also bind the complex. NFATC proteins bind to DNA as monomers. Interacts with HOMER2 and HOMER3; this interaction may compete with calcineurin/PPP3CA-binding and hence prevent NFATC1 dephosphorylation and activation. Interacts with TLE6/GRG6. Post-translationally, phosphorylated by NFATC-kinase and GSK3B; phosphorylation induces NFATC1 nuclear exit and dephosphorylation by calcineurin promotes nuclear import. Phosphorylation by PKA and DYRK2 negatively modulates nuclear accumulation, and promotes subsequent phosphorylation by GSK3B or casein kinase 1. As to expression, expressed in the submandibular gland (at protein level). Expressed in basal epidermal cells (at protein level). Expressed in spleen, skeletal muscle and skin. Express in the lung and thymus. Weakly expressed in heart, brain, liver and kidney. Not expressed in testis. Expressed in osteoclasts. Also expressed during TNFSF11/RANKL-induced differentiation of bone marrow-derived macrophages to osteoclasts.

The protein localises to the cytoplasm. It localises to the nucleus. Plays a role in the inducible expression of cytokine genes in T-cells, especially in the induction of the IL-2 or IL-4 gene transcription. Also controls gene expression in embryonic cardiac cells. Could regulate not only the activation and proliferation but also the differentiation and programmed death of T-lymphocytes as well as lymphoid and non-lymphoid cells. Required for osteoclastogenesis and regulates many genes important for osteoclast differentiation and function. The polypeptide is Nuclear factor of activated T-cells, cytoplasmic 1 (Nfatc1) (Mus musculus (Mouse)).